Consider the following 606-residue polypeptide: Probable potassium transport system protein Kup (606 aa).

The next 12 helical transmembrane spans lie at 18–38 (GLVF…VFAL), 46–66 (VFGI…AEYA), 97–117 (LTFV…DGVI), 138–158 (GLHQ…LFVF), 166–186 (VAGA…LSGA), 212–232 (GLAG…GEAL), 247–267 (AWYI…AFII), 287–307 (LYIP…QAMI), 339–359 (IYIG…MLVF), 368–388 (AYGL…ILIL), 395–415 (WKAV…TACL), and 418–438 (LPHG…TILV).

Belongs to the HAK/KUP transporter (TC 2.A.72) family.

The protein localises to the cell inner membrane. It carries out the reaction K(+)(in) + H(+)(in) = K(+)(out) + H(+)(out). Its function is as follows. Transport of potassium into the cell. Likely operates as a K(+):H(+) symporter. This is Probable potassium transport system protein Kup from Trichlorobacter lovleyi (strain ATCC BAA-1151 / DSM 17278 / SZ) (Geobacter lovleyi).